We begin with the raw amino-acid sequence, 192 residues long: uncharacterized protein (192 aa).

This is an uncharacterized protein from Aquifex aeolicus (strain VF5).